Consider the following 435-residue polypeptide: NADH-quinone oxidoreductase subunit D (435 aa).

Belongs to the complex I 49 kDa subunit family. NDH-1 is composed of 14 different subunits. Subunits NuoB, C, D, E, F, and G constitute the peripheral sector of the complex.

It localises to the cell inner membrane. The enzyme catalyses a quinone + NADH + 5 H(+)(in) = a quinol + NAD(+) + 4 H(+)(out). Its function is as follows. NDH-1 shuttles electrons from NADH, via FMN and iron-sulfur (Fe-S) centers, to quinones in the respiratory chain. The immediate electron acceptor for the enzyme in this species is believed to be ubiquinone. Couples the redox reaction to proton translocation (for every two electrons transferred, four hydrogen ions are translocated across the cytoplasmic membrane), and thus conserves the redox energy in a proton gradient. The sequence is that of NADH-quinone oxidoreductase subunit D from Xanthomonas axonopodis pv. citri (strain 306).